Reading from the N-terminus, the 669-residue chain is Beta-galactosidase (669 aa).

The N-terminal stretch at 1–24 (MDFPGAARLLSLLLVPLLLGPARG) is a signal peptide. Residues 25–29 (LRNAS) constitute a propeptide that is removed on maturation. Asn27 is a glycosylation site (N-linked (GlcNAc...) asparagine). Residues Tyr84, Glu130, and Asn188 each contribute to the substrate site. Glu189 serves as the catalytic Proton donor. The cysteines at positions 196 and 231 are disulfide-linked. Asn248 carries an N-linked (GlcNAc...) asparagine glycan. The active-site Nucleophile is the Glu269. Tyr334 is a substrate binding site. 4 N-linked (GlcNAc...) asparagine glycosylation sites follow: Asn465, Asn499, Asn547, and Asn557. A disulfide bridge connects residues Cys628 and Cys636. The interval 649 to 669 (TPTSSHPLPDLSDRDSGWDRV) is disordered. The span at 659 to 669 (LSDRDSGWDRV) shows a compositional bias: basic and acidic residues.

The protein belongs to the glycosyl hydrolase 35 family. In terms of assembly, homodimer. May form higher multimers.

It is found in the lysosome. The enzyme catalyses Hydrolysis of terminal non-reducing beta-D-galactose residues in beta-D-galactosides.. Functionally, cleaves beta-linked terminal galactosyl residues from gangliosides, glycoproteins, and glycosaminoglycans. This chain is Beta-galactosidase (GLB1), found in Felis catus (Cat).